The chain runs to 291 residues: Small ribosomal subunit biogenesis GTPase RsgA (291 aa).

The CP-type G domain occupies 63 to 221 (HNELKRPPVS…IADTPGFSAL (159 aa)). GTP contacts are provided by residues 112–115 (TKKD) and 164–172 (GQSGVGKST). Zn(2+)-binding residues include C245, C250, H252, and C258.

This sequence belongs to the TRAFAC class YlqF/YawG GTPase family. RsgA subfamily. As to quaternary structure, monomer. Associates with 30S ribosomal subunit, binds 16S rRNA. The cofactor is Zn(2+).

It localises to the cytoplasm. In terms of biological role, one of several proteins that assist in the late maturation steps of the functional core of the 30S ribosomal subunit. Helps release RbfA from mature subunits. May play a role in the assembly of ribosomal proteins into the subunit. Circularly permuted GTPase that catalyzes slow GTP hydrolysis, GTPase activity is stimulated by the 30S ribosomal subunit. This Staphylococcus haemolyticus (strain JCSC1435) protein is Small ribosomal subunit biogenesis GTPase RsgA.